The following is a 546-amino-acid chain: Amidophosphoribosyltransferase (546 aa).

Low complexity predominate over residues 1–26 (MSAPQQQQQSQQKQQQHVRVVEQQQV). The interval 1-39 (MSAPQQQQQSQQKQQQHVRVVEQQQVEPAEAVTSSMESE) is disordered. Positions 1-53 (MSAPQQQQQSQQKQQQHVRVVEQQQVEPAEAVTSSMESESISASKELTGLTHE) are excised as a propeptide. Cys54 acts as the Nucleophile in catalysis. Residues 54–302 (CGVFGAIACG…PGEIVELSRS (249 aa)) form the Glutamine amidotransferase type-2 domain. Position 113 is a phosphoserine (Ser113). Thr114 is modified (phosphothreonine). Ser120 bears the Phosphoserine mark. [4Fe-4S] cluster is bound at residue Cys321. Residues Ser368, Asp430, and Asp431 each coordinate Mg(2+). Residues Cys467, Cys528, and Cys531 each contribute to the [4Fe-4S] cluster site.

This sequence in the C-terminal section; belongs to the purine/pyrimidine phosphoribosyltransferase family. The cofactor is Mg(2+). [4Fe-4S] cluster is required as a cofactor.

The catalysed reaction is 5-phospho-beta-D-ribosylamine + L-glutamate + diphosphate = 5-phospho-alpha-D-ribose 1-diphosphate + L-glutamine + H2O. It participates in purine metabolism; IMP biosynthesis via de novo pathway; N(1)-(5-phospho-D-ribosyl)glycinamide from 5-phospho-alpha-D-ribose 1-diphosphate: step 1/2. Its function is as follows. Involved in the first step (and regulatory point) of the de novo biosynthesis of purine nucleotides, where it catalyzes the transfer of glutamine amide to 5-phospho-alpha-D-ribose 1-diphosphate. This Drosophila melanogaster (Fruit fly) protein is Amidophosphoribosyltransferase (Prat).